The sequence spans 164 residues: Protein SprT (164 aa).

Residues 12-157 form the SprT-like domain; the sequence is CFLQAESFFK…CRRCRQTLVF (146 aa). Position 69 (His-69) interacts with Zn(2+). Glu-70 is a catalytic residue. His-73 provides a ligand contact to Zn(2+).

This sequence belongs to the SprT family. Requires Zn(2+) as cofactor.

It is found in the cytoplasm. This chain is Protein SprT, found in Pseudomonas fluorescens (strain SBW25).